The primary structure comprises 454 residues: Protein translocase subunit SecY (454 aa).

The next 10 helical transmembrane spans lie at 43-63 (LTIA…LPYI), 97-117 (FTLG…AFVI), 144-164 (TLLL…AFIF), 168-188 (ILKL…ILWI), 201-221 (SSFL…GMSF), 226-246 (IFSF…WAAI), 289-309 (PVVF…YILL), 334-354 (IVEA…IIDP), 390-410 (LIGA…GFVF), and 414-434 (IFKG…TEIL).

Belongs to the SecY/SEC61-alpha family. Component of the plastid Sec protein translocase complex, which is composed of at least SecY and SecE.

Its subcellular location is the plastid. It localises to the chloroplast thylakoid membrane. In terms of biological role, the central subunit of the protein translocation channel SecYE. Consists of two halves formed by TMs 1-5 and 6-10. These two domains form a lateral gate at the front which open onto the bilayer between TMs 2 and 7, and are clamped together by SecE at the back. The channel is closed by both a pore ring composed of hydrophobic SecY resides and a short helix (helix 2A) on the extracellular side of the membrane which forms a plug. The chain is Protein translocase subunit SecY from Heterosigma akashiwo (strain NIES-293 / 8280G21-1).